A 366-amino-acid polypeptide reads, in one-letter code: 5-hydroxytryptamine receptor 1F (366 aa).

Residues 1 to 24 (MDFLNASDQNLTSEELLNRMPSKI) lie on the Extracellular side of the membrane. Asn5 and Asn10 each carry an N-linked (GlcNAc...) asparagine glycan. Residues 25-49 (LVSLTLSGLALMTTTINSLVIAAII) traverse the membrane as a helical segment. At 50–59 (VTRKLHHPAN) the chain is on the cytoplasmic side. Residues 60 to 81 (YLICSLAVTDFLVAVLVMPFSI) traverse the membrane as a helical segment. Residues 82-96 (VYIVRESWIMGQVLC) are Extracellular-facing. A disulfide bridge connects residues Cys96 and Cys172. A helical membrane pass occupies residues 97–119 (DIWLSVDIICCTCSILHLSAIAL). The serotonin site is built by Asp103 and Cys107. The DRY motif; important for ligand-induced conformation changes signature appears at 120 to 122 (DRY). Residues 120 to 139 (DRYRAITDAVEYARKRTPRH) are Cytoplasmic-facing. A helical transmembrane segment spans residues 140–159 (AGIMITIVWVISVFISMPPL). At 160–178 (FWRHQGTSRDDECVIKHDH) the chain is on the extracellular side. A helical transmembrane segment spans residues 179–202 (IVSTIYSTFGAFYIPLVLILILYY). Residues 203–291 (KIYRAARTLY…KISGTRERKA (89 aa)) are Cytoplasmic-facing. Residues 292–315 (ATTLGLILGAFVICWLPFFVKELV) form a helical membrane-spanning segment. Topologically, residues 316–327 (VNVCEKCKISEE) are extracellular. The helical transmembrane segment at 328–350 (MSNFLAWLGYLNSLINPLIYTIF) threads the bilayer. The NPxxY motif; important for ligand-induced conformation changes and signaling signature appears at 343–347 (NPLIY). Residues 351-366 (NEDFKKAFQKLVRCRY) lie on the Cytoplasmic side of the membrane.

It belongs to the G-protein coupled receptor 1 family. As to expression, detected in hippocampus.

The protein resides in the cell membrane. G-protein coupled receptor for 5-hydroxytryptamine (serotonin). Also functions as a receptor for various alkaloids and psychoactive substances. Ligand binding causes a conformation change that triggers signaling via guanine nucleotide-binding proteins (G proteins) and modulates the activity of downstream effectors, such as adenylate cyclase. HTR1F is coupled to G(i)/G(o) G alpha proteins and mediates inhibitory neurotransmission by inhibiting adenylate cyclase activity. The protein is 5-hydroxytryptamine receptor 1F (Htr1f) of Mus musculus (Mouse).